Reading from the N-terminus, the 255-residue chain is SKA complex subunit 1 (255 aa).

An N-acetylalanine modification is found at A2. Residues 49 to 91 are a coiled coil; it reads INELLNKLELEIQYQEQTNNSLKELCESLEEDYKDIEHLKENV. Residues 92–132 are flexiple loop that anchors MAPRE1; sequence PSHLPQVTVTQSCVKGSDLDPEEPIKVEEPEPVKKPPKEQR. The short motif at 93–96 is the SXLP motif; mediates interaction with MAPRE1, targeting to microtubule plus ends, stabilization on kinetochores and is required for proper chromosome alignment to the metaphase plate element; that stretch reads SHLP. A disordered region spans residues 106-131; the sequence is KGSDLDPEEPIKVEEPEPVKKPPKEQ. Over residues 114 to 131 the composition is skewed to basic and acidic residues; it reads EPIKVEEPEPVKKPPKEQ. The tract at residues 132-255 is binds microtubules and protein phosphatase PP1 subunit PPP1CA; it reads RSIKEMPFIT…GGGLTRYVIT (124 aa). T157 carries the post-translational modification Phosphothreonine; by AURKB. Position 242 is a phosphoserine; by AURKB (S242).

This sequence belongs to the SKA1 family. In terms of assembly, component of the SKA complex, composed of SKA1, SKA2 and SKA3. The SKA complex is a homodimer organized around a central W-shaped coiled-coil structure, formed by the interacting domains of SKA1, SKA2, and SKA3, each end of the 'W' is extended further by the C-terminal microtubule-binding domains of SKA1 and SKA3; the complex forms extended structures on microtubules. Interacts (via SXLP motif) with MAPRE1 (via C-terminus); the interaction is direct and stabilizes the kinetochore-microtubule attachment of the SKA1 complex. Interacts (via C-terminus) with protein phosphatase PP1 subunit PPP1CA; the interaction is direct and required for recruitment of PPP1CA to the kinetochore. Interacts with the NDC80 complex; the interaction is required to establish kinetochore-microtubule end-on attachments. Post-translationally, phosphorylated by AURKB at Thr-157 and Ser-242 which negatively regulates the association of the SKA complex with kinetochores to allow correction of aberrant kinetochore-microtubule interactions and promote mitotic sister chromatid biorientation.

It localises to the cytoplasm. The protein localises to the cytoskeleton. It is found in the spindle. The protein resides in the chromosome. Its subcellular location is the centromere. It localises to the kinetochore. The protein localises to the microtubule organizing center. It is found in the centrosome. Component of the SKA complex, a microtubule plus end-binding complex of the outer kinetochore that stabilizes spindle microtubule-kinetochore attachments, promotes alignment of chromosomes at the mitotic spindle equator (chromosome congression) and assists suppression of the spindle assembly checkpoint. Kinetochores, consisting of a centromere-associated inner segment and a microtubule-contacting outer segment, play a crucial role in chromosome segregation by mediating the physical connection between centromeric DNA and spindle microtubules. The outer kinetochore is made up of the ten-subunit KMN network complex, comprising the MIS12, NDC80 and KNL1 complexes, and auxiliary microtubule-associated components such as the SKA complex; together they connect the outer kinetochore with the inner kinetochore, bind microtubules, and mediate interactions with mitotic checkpoint proteins that delay anaphase until chromosomes are bioriented on the spindle. The SKA complex is loaded onto bioriented kinetochores and it facilitates chromosome congression by stabilizing microtubules together with MAPRE1, and end-on attachment of the NDC80 complex to depolymerizing spindle microtubules, thereby assisting the poleward-moving kinetochore in withstanding microtubule pulling forces. The complex associates with dynamic microtubule plus-ends and can track both depolymerizing and elongating microtubules. The complex recruits protein phosphatase 1 (PP1) to the kinetochore in prometaphase and metaphase, to oppose spindle assembly checkpoint signaling and promote the onset of anaphase. In the complex, it mediates interactions with microtubules. It also stimulates AURKB/Aurora B catalytic activity. During meiosis the SKA complex stabilizes the meiotic spindle and is required for its migration to the cortex. The chain is SKA complex subunit 1 (SKA1) from Homo sapiens (Human).